Reading from the N-terminus, the 206-residue chain is LexA repressor (206 aa).

A DNA-binding region (H-T-H motif) is located at residues Val-28–Ala-48. Active-site for autocatalytic cleavage activity residues include Ser-128 and Lys-166.

Belongs to the peptidase S24 family. As to quaternary structure, homodimer.

It catalyses the reaction Hydrolysis of Ala-|-Gly bond in repressor LexA.. Represses a number of genes involved in the response to DNA damage (SOS response), including recA and lexA. In the presence of single-stranded DNA, RecA interacts with LexA causing an autocatalytic cleavage which disrupts the DNA-binding part of LexA, leading to derepression of the SOS regulon and eventually DNA repair. In Bacillus pumilus (strain SAFR-032), this protein is LexA repressor.